A 198-amino-acid chain; its full sequence is Dermorphin-2 (198 aa).

An N-terminal signal peptide occupies residues 1–20 (MSFLKKSLLLILFLGLVSLS). A propeptide spanning residues 21 to 45 (VCKEEKRVSEEENENEENHEEGSEM) is cleaved from the precursor. The tract at residues 24-198 (EEKRVSEEEN…AFGYPSGEAK (175 aa)) is disordered. Ala49 carries the D-alanine (Ala) modification. Position 54 is a serine amide (Ser54). Residues 56 to 65 (EAKKIKRESE) show a composition bias toward basic and acidic residues. Residues 56-80 (EAKKIKRESEEEKEIEENHEEGSEM) constitute a propeptide that is removed on maturation. D-alanine (Ala) is present on Ala84. A Serine amide modification is found at Ser89. The propeptide occupies 91–115 (EAKKIKRESEEENENEENHEEGSEM). Over residues 100–109 (EEENENEENH) the composition is skewed to acidic residues. Ala119 carries the post-translational modification D-alanine (Ala). Residue Ser124 is modified to Serine amide. Over residues 126-135 (EAKKIKRESE) the composition is skewed to basic and acidic residues. Residues 126–150 (EAKKIKRESEEEKEIEENHEEGSEM) constitute a propeptide that is removed on maturation. Ala154 carries the post-translational modification D-alanine (Ala). Ser159 bears the Serine amide mark. A propeptide spanning residues 161-185 (EAKKIKRESEEENENEENHEEGSEM) is cleaved from the precursor. A compositionally biased stretch (acidic residues) spans 170–179 (EEENENEENH). A D-alanine (Ala) modification is found at Ala189. Serine amide is present on Ser194. The propeptide occupies 196–198 (EAK).

It belongs to the frog skin active peptide (FSAP) family. Dermorphin subfamily. As to expression, expressed by the skin glands.

The protein localises to the secreted. Functionally, dermorphin has a very potent opiate-like activity. It has high affinity and selectivity for mu-type opioid receptors. The sequence is that of Dermorphin-2 from Phyllomedusa sauvagei (Sauvage's leaf frog).